The following is a 524-amino-acid chain: Calcium-dependent protein kinase 1 (524 aa).

A disordered region spans residues 1 to 34 (MGCSQSSNVKDFKTRRSKFTNGNNYGKSGNNKNS). G2 carries N-myristoyl glycine lipidation. C3 is lipidated: S-palmitoyl cysteine. A Basic cluster involved in membrane binding motif is present at residues 10–20 (KDFKTRRSKFT). S17, S28, and S34 each carry phosphoserine; by autocatalysis. The segment covering 21–32 (NGNNYGKSGNNK) has biased composition (low complexity). In terms of domain architecture, Protein kinase spans 56 to 325 (YFKVRKLGSG…AKEALNSKWI (270 aa)). ATP-binding positions include 62 to 70 (LGSGAYGEV) and K85. At S64 the chain carries Phosphoserine; by PKG; by autocatalysis. The residue at position 100 (T100) is a Phosphothreonine; by autocatalysis. S118 bears the Phosphoserine; by autocatalysis mark. D191 serves as the catalytic Proton acceptor. Phosphoserine is present on S217. A Phosphoserine; by autocatalysis modification is found at S220. T231 carries the post-translational modification Phosphothreonine; by PKG; by autocatalysis. S335 carries the post-translational modification Phosphoserine; by autocatalysis. The J domain autoinhibitory motif motif lies at 346–353 (NMRKFEGS). The segment at 346–364 (NMRKFEGSQKLAQAAILFI) is j domain. The short motif at 354-364 (QKLAQAAILFI) is the J domain interacts with the EF-hand domains element. 4 consecutive EF-hand domains span residues 372–407 (EERKELTDIFKKLDKNGDGQLDKKELIEGYNILRSF), 416–451 (NVEEEVDNILKEVDFDKNGYIEYSEFISVCMDKQIL), 452–487 (FSEERLRDAFNLFDTDKSGKITKEELANLFGLTSIS), and 488–521 (EQMWNEVLGEADKNKDNMIDFDEFVNMMHKICDN). Ca(2+) is bound by residues D385, N387, D389, Q391, E396, D429, D431, N433, Y435, E440, D465, D467, S469, K471, E476, D499, N501, D503, M505, and E510.

The protein belongs to the protein kinase superfamily. Ser/Thr protein kinase family. CDPK subfamily. Monomer. Forms a high molecular weight (250 and 400 kDa) complex. Forms a complex composed of CDPK1, PKA regulatory subunit PKAr and 14-3-3I; the complex is formed in merozoites in response to low extracellular level of K(+) and may play a role in microneme secretion. Interacts (when phosphorylated) with 14-3-3I in a Ca(2+)-independent manner; the interaction does not regulate CDPK1 catalytic activity but is required for merozoite invasion of host erythrocytes. Interacts with PKA regulatory subunit PKAr; in a Ca(2+)-dependent manner. Interacts with SERA5 p50 in the late schizont stage. Interacts with inner membrane complex protein IMC1g in late schizonts. Interacts with rhoptry protein RhopH3 in merozoites. It depends on Mg(2+) as a cofactor. In terms of processing, myristoylated. Myristoylation, palmitoylation and the basic cluster motif are required for the localization to the parasitophorous vacuole membrane. Post-translationally, palmitoylated. Palmitoylation increases in merozoites in response to low level of extracellular K(+) in the host blood. Myristoylation, palmitoylation and the basic cluster motif are required for the localization to the parasitophorous vacuole membrane. Phosphorylation at Ser-64 occurs at late schizont stage and regulates CDPK1 protein-protein interaction. Phosphorylated at Ser-28, Ser-34 and Ser-64 in merozoites in response to low extracellular level of K(+). Phosphorylation at Thr-231 may regulate CDPK1 kinase activity. Phosphorylation increases in response to an increase in intracellular Ca(2+) levels. Autophosphorylated in vitro. Autophosphorylation does not affect membrane localization in vitro.

Its subcellular location is the membrane. The protein localises to the cell membrane. The protein resides in the parasitophorous vacuole membrane. It localises to the cytoplasm. It is found in the cell projection. Its subcellular location is the cilium. The protein localises to the flagellum. The protein resides in the host cell membrane. The enzyme catalyses L-seryl-[protein] + ATP = O-phospho-L-seryl-[protein] + ADP + H(+). The catalysed reaction is L-threonyl-[protein] + ATP = O-phospho-L-threonyl-[protein] + ADP + H(+). Activated by calcium. Upon calcium binding to the EF-hand domains, the C-terminus of the junction domain (J domain) undergoes a conformational change which results in the dissociation of the pseudo-substrate inhibitory motif from the catalytic domain. This, in turn may facilitate the autophosphorylation of the activation loop at Thr-231, which leads to the kinase activation. May be negatively regulated by PKA-mediated phosphorylation. Inhibited by purfalcamine. Its function is as follows. Calcium-dependent protein kinase which acts as a sensor and effector of intracellular Ca(2+) levels probably in part downstream of cGMP-activated PKG kinase. By phosphorylating various proteins, required for microneme secretion and thus merozoite egress from and invasion of host erythrocytes. During gametogenesis, essential for the development of both male and female gametes. Phosphorylates SERA5 p50 which enhances SERA5 p50 protease activity; however, SERA5 p50 protease activity has been shown in other studies to be controversial. Probably by phosphorylating SERA5 p50, plays a role in merozoite egress from host erythrocytes. Probably prior or during merozoite invasion of host erythrocytes, phosphorylates rhoptry protein RhopH3 which is required for RhopH3 localization to rhoptries and for its secretion. Probably in late schizonts, phosphorylates myosin A tail domain-interacting protein MTIP and glideosome-associated protein 45 GAP45, both of which are components of the motor complex that generates the force required by the parasite to invade host cells. In late schizonts, phosphorylates inner membrane complex protein IMC1g. In late schizonts, phosphorylates PKA regulatory subunit PKAr in a calcium-dependent manner, which may contribute to the dissociation of regulatory PKAr and catalytic PKAc subunits and promote the activation of PKAc. May phosphorylate raf kinase inhibitory protein RKIP which in turn may regulate CDPK1 catalytic activity. May phosphorylate proteins of the host erythrocyte membranes. This is Calcium-dependent protein kinase 1 from Plasmodium falciparum (isolate 3D7).